The sequence spans 374 residues: Golgi-associated kinase 1B (374 aa).

The Cytoplasmic segment spans residues 1 to 38 (MSPDRTGRGSSSSSSSLKRLVCKSFVRAWGRRRPNLRR). Residues 39–61 (AVLLICTASAIYGIVIASQVLRG) traverse the membrane as a helical; Signal-anchor for type II membrane protein segment. Residues 62-374 (STHPGKALRK…LLQVYTRLDR (313 aa)) lie on the Extracellular side of the membrane. Positions 136–146 (VRPKKRRKYGA) are enriched in basic residues. The interval 136–177 (VRPKKRRKYGARRPGVVQDTESKKDTLWSKVPNSQHKSQAQS) is disordered. Over residues 166–177 (VPNSQHKSQAQS) the composition is skewed to polar residues. Residues Asn-281 and Asn-314 are each glycosylated (N-linked (GlcNAc...) asparagine).

It belongs to the GASK family.

It localises to the golgi apparatus membrane. This chain is Golgi-associated kinase 1B, found in Xenopus laevis (African clawed frog).